Here is a 90-residue protein sequence, read N- to C-terminus: Small ribosomal subunit protein uS19 (90 aa).

Belongs to the universal ribosomal protein uS19 family.

Functionally, protein S19 forms a complex with S13 that binds strongly to the 16S ribosomal RNA. The polypeptide is Small ribosomal subunit protein uS19 (Hydrogenovibrio crunogenus (strain DSM 25203 / XCL-2) (Thiomicrospira crunogena)).